The sequence spans 617 residues: Elongation factor 4 (617 aa).

A tr-type G domain is found at 17–203 (ERIRNFCIIA…RVCELVPHPV (187 aa)). GTP is bound by residues 29–34 (DHGKST) and 150–153 (NKID).

This sequence belongs to the TRAFAC class translation factor GTPase superfamily. Classic translation factor GTPase family. LepA subfamily.

The protein localises to the cell membrane. It carries out the reaction GTP + H2O = GDP + phosphate + H(+). In terms of biological role, required for accurate and efficient protein synthesis under certain stress conditions. May act as a fidelity factor of the translation reaction, by catalyzing a one-codon backward translocation of tRNAs on improperly translocated ribosomes. Back-translocation proceeds from a post-translocation (POST) complex to a pre-translocation (PRE) complex, thus giving elongation factor G a second chance to translocate the tRNAs correctly. Binds to ribosomes in a GTP-dependent manner. The sequence is that of Elongation factor 4 from Corynebacterium urealyticum (strain ATCC 43042 / DSM 7109).